A 567-amino-acid chain; its full sequence is Alpha-glucosidase (567 aa).

An N-terminal signal peptide occupies residues 1–17 (MKAVIVFCLMALSIVDA). 2 N-linked (GlcNAc...) asparagine glycosylation sites follow: Asn88 and Asn123. The Nucleophile role is filled by Asp223. Asn247 is a glycosylation site (N-linked (GlcNAc...) asparagine). The active-site Proton donor is the Glu286. Asn290, Asn313, Asn319, Asn499, and Asn507 each carry an N-linked (GlcNAc...) asparagine glycan.

In terms of assembly, monomer. In terms of tissue distribution, expressed specifically in the hypopharyngeal glands of worker bees. Also found in the brain of worker bees (at protein level).

The catalysed reaction is Hydrolysis of terminal, non-reducing (1-&gt;4)-linked alpha-D-glucose residues with release of alpha-D-glucose.. Converts sucrose in nectar to glucose and fructose. This chain is Alpha-glucosidase, found in Apis mellifera (Honeybee).